The chain runs to 159 residues: Endoribonuclease YbeY (159 aa).

Residues H114, H118, and H124 each coordinate Zn(2+).

Belongs to the endoribonuclease YbeY family. It depends on Zn(2+) as a cofactor.

The protein resides in the cytoplasm. Functionally, single strand-specific metallo-endoribonuclease involved in late-stage 70S ribosome quality control and in maturation of the 3' terminus of the 16S rRNA. This is Endoribonuclease YbeY from Pectobacterium atrosepticum (strain SCRI 1043 / ATCC BAA-672) (Erwinia carotovora subsp. atroseptica).